Reading from the N-terminus, the 400-residue chain is CinA-like protein (400 aa).

This sequence belongs to the CinA family.

This chain is CinA-like protein, found in Escherichia coli (strain 55989 / EAEC).